Consider the following 921-residue polypeptide: Respiratory burst oxidase homolog protein D (921 aa).

The interval 1–71 (MKMRRGNSSN…RSNSVAGGRG (71 aa)) is disordered. Topologically, residues 1 to 376 (MKMRRGNSSN…KYFILDNWQR (376 aa)) are cytoplasmic. Residues Ser-8, Ser-9, Ser-26, and Ser-39 each carry the phosphoserine modification. The span at 21–31 (NSDTNSDTESI) shows a compositional bias: polar residues. Residues 44 to 53 (RPKRASKKNA) are compositionally biased toward basic residues. EF-hand-like stretches follow at residues 193–203 (SADSNGLLLSA) and 230–241 (NNVSGDAITKEQ). EF-hand domains lie at 253–288 (SFDA…SASA) and 297–332 (QAKE…APNQ). Ca(2+) contacts are provided by Asp-266, Asp-268, Asp-270, Arg-272, and Glu-277. Ser-339, Ser-343, and Ser-347 each carry phosphoserine. The chain crosses the membrane as a helical span at residues 377–397 (LWIMMLWLGICGGLFTYKFIQ). Residues 398 to 461 (YKNKAAYGVM…FDDSLNFHKV (64 aa)) lie on the Extracellular side of the membrane. Residues 415–572 (KGGAETLKFN…LFIIVYALLI (158 aa)) form the Ferric oxidoreductase domain. The helical transmembrane segment at 462-482 (IASGIVVGVLLHAGAHLTCDF) threads the bilayer. Topologically, residues 483–516 (PRLIAADEDTYEPMEKYFGDQPTSYWWFVKGVEG) are cytoplasmic. The helical transmembrane segment at 517-537 (WTGIVMVVLMAIAFTLATPWF) threads the bilayer. The Extracellular segment spans residues 538–559 (RRNKLNLPNFLKKLTGFNAFWY). The chain crosses the membrane as a helical span at residues 560–580 (THHLFIIVYALLIVHGIKLYL). Topologically, residues 581-588 (TKIWYQKT) are cytoplasmic. Residues 589–606 (TWMYLAVPILLYASERLL) form a helical membrane-spanning segment. The Extracellular portion of the chain corresponds to 607–734 (RAFRSSIKPV…PYGAPAQDYK (128 aa)). Residues 611–732 (SSIKPVKMIK…DGPYGAPAQD (122 aa)) enclose the FAD-binding FR-type domain. A helical transmembrane segment spans residues 735–755 (KYDVVLLVGLGIGATPMISIL). The Cytoplasmic segment spans residues 756–921 (KDIINNMKGP…TKFDFHKENF (166 aa)).

This sequence belongs to the RBOH (TC 5.B.1.3) family. Monomer and homodimer. Interacts with BIK1 and FLS2. Interacts with PBL13. Binds to SIK1 upon flagellin perception and becomes activated by phosphorylation. Post-translationally, phosphorylated at Ser-39, Ser-343 and Ser-347 by BIK1 upon flagellin (flg22) treatment. Activated by phosphorylation at Ser-347 mediated by SIK1 and at Ser-8, Ser-9 and Ser-339 upon flagellin (e.g. flg22) perception. In terms of tissue distribution, more abundant in roots than in leaves, stems or inflorescences. Expressed in mesophyll and guard cells.

It localises to the membrane. With respect to regulation, inhibited by diphenylene iodinium (DPI). Functionally, calcium-dependent NADPH oxidase that generates superoxide. Involved in the generation of reactive oxygen species (ROS) during incompatible interactions with pathogens, in response to pathogen-associated molecular pattern (PAMP)-triggered immunity (PTI) signaling and in UV-B and abscisic acid ROS-dependent signaling and via SIK1 mediated activation by phosphorylation. Might be required for ROS signal amplification during light stress. This chain is Respiratory burst oxidase homolog protein D, found in Arabidopsis thaliana (Mouse-ear cress).